We begin with the raw amino-acid sequence, 195 residues long: Protein GrpE (195 aa).

A compositionally biased stretch (polar residues) spans 1–24; the sequence is MSSKEQNTPDEQVSQESEMEQGQQ. Residues 1–40 form a disordered region; it reads MSSKEQNTPDEQVSQESEMEQGQQAEAAPETVDVVDPRDE.

Belongs to the GrpE family. Homodimer.

The protein resides in the cytoplasm. Participates actively in the response to hyperosmotic and heat shock by preventing the aggregation of stress-denatured proteins, in association with DnaK and GrpE. It is the nucleotide exchange factor for DnaK and may function as a thermosensor. Unfolded proteins bind initially to DnaJ; upon interaction with the DnaJ-bound protein, DnaK hydrolyzes its bound ATP, resulting in the formation of a stable complex. GrpE releases ADP from DnaK; ATP binding to DnaK triggers the release of the substrate protein, thus completing the reaction cycle. Several rounds of ATP-dependent interactions between DnaJ, DnaK and GrpE are required for fully efficient folding. The polypeptide is Protein GrpE (Sodalis glossinidius (strain morsitans)).